We begin with the raw amino-acid sequence, 293 residues long: Ribosomal protein L11 methyltransferase (293 aa).

Residues threonine 145, glycine 166, aspartate 188, and asparagine 230 each coordinate S-adenosyl-L-methionine.

The protein belongs to the methyltransferase superfamily. PrmA family.

Its subcellular location is the cytoplasm. The enzyme catalyses L-lysyl-[protein] + 3 S-adenosyl-L-methionine = N(6),N(6),N(6)-trimethyl-L-lysyl-[protein] + 3 S-adenosyl-L-homocysteine + 3 H(+). In terms of biological role, methylates ribosomal protein L11. The chain is Ribosomal protein L11 methyltransferase from Escherichia coli (strain 55989 / EAEC).